The following is a 330-amino-acid chain: Type II methyltransferase M.HaeIII (330 aa).

One can recognise an SAM-dependent MTase C5-type domain in the interval 1–327 (MNLISLFSGA…KTIKSALEIC (327 aa)). ATP-binding positions include Glu29 and 50-51 (DI). The active site involves Cys71. Position 260 (Asn260) interacts with ATP.

Belongs to the class I-like SAM-binding methyltransferase superfamily. C5-methyltransferase family. As to quaternary structure, monomer.

The catalysed reaction is a 2'-deoxycytidine in DNA + S-adenosyl-L-methionine = a 5-methyl-2'-deoxycytidine in DNA + S-adenosyl-L-homocysteine + H(+). A methylase, recognizes the double-stranded sequence 5'-GGCC-3', methylates C-3 on both strands, and protects the DNA from cleavage by the HaeIII endonuclease. In Haemophilus aegyptius, this protein is Type II methyltransferase M.HaeIII (haeIIIM).